We begin with the raw amino-acid sequence, 343 residues long: 3-dehydroquinate synthase (343 aa).

Residues 61 to 66 (SGEKYK), 95 to 99 (GVISD), 119 to 120 (TT), Lys132, Lys141, and 159 to 162 (FLKT) each bind NAD(+). Positions 174, 231, and 248 each coordinate Zn(2+).

It belongs to the sugar phosphate cyclases superfamily. Dehydroquinate synthase family. It depends on NAD(+) as a cofactor. Requires Co(2+) as cofactor. The cofactor is Zn(2+).

The protein localises to the cytoplasm. The catalysed reaction is 7-phospho-2-dehydro-3-deoxy-D-arabino-heptonate = 3-dehydroquinate + phosphate. Its pathway is metabolic intermediate biosynthesis; chorismate biosynthesis; chorismate from D-erythrose 4-phosphate and phosphoenolpyruvate: step 2/7. In terms of biological role, catalyzes the conversion of 3-deoxy-D-arabino-heptulosonate 7-phosphate (DAHP) to dehydroquinate (DHQ). The chain is 3-dehydroquinate synthase from Helicobacter pylori (strain J99 / ATCC 700824) (Campylobacter pylori J99).